The chain runs to 364 residues: Aminomethyltransferase (364 aa).

The protein belongs to the GcvT family. As to quaternary structure, the glycine cleavage system is composed of four proteins: P, T, L and H.

It carries out the reaction N(6)-[(R)-S(8)-aminomethyldihydrolipoyl]-L-lysyl-[protein] + (6S)-5,6,7,8-tetrahydrofolate = N(6)-[(R)-dihydrolipoyl]-L-lysyl-[protein] + (6R)-5,10-methylene-5,6,7,8-tetrahydrofolate + NH4(+). The glycine cleavage system catalyzes the degradation of glycine. This is Aminomethyltransferase from Thermotoga sp. (strain RQ2).